A 410-amino-acid polypeptide reads, in one-letter code: 2,3-bisphosphoglycerate-independent phosphoglycerate mutase (410 aa).

It belongs to the BPG-independent phosphoglycerate mutase family. A-PGAM subfamily.

It carries out the reaction (2R)-2-phosphoglycerate = (2R)-3-phosphoglycerate. Its pathway is carbohydrate degradation; glycolysis; pyruvate from D-glyceraldehyde 3-phosphate: step 3/5. Catalyzes the interconversion of 2-phosphoglycerate and 3-phosphoglycerate. The sequence is that of 2,3-bisphosphoglycerate-independent phosphoglycerate mutase from Pyrococcus abyssi (strain GE5 / Orsay).